Reading from the N-terminus, the 161-residue chain is Dihydrofolate reductase (161 aa).

Residues 2–161 (NISLIAAISK…YNYSFEILSR (160 aa)) enclose the DHFR domain. 6–8 (IAA) is a substrate binding site. NADP(+) is bound by residues 7–8 (AA) and 15–20 (IGYKNK). D28 contributes to the substrate binding site. 44-47 (GRLT) is a binding site for NADP(+). A substrate-binding site is contributed by R59. Residues 64 to 66 (ISS) and 96 to 101 (IGGAKI) contribute to the NADP(+) site. T115 serves as a coordination point for substrate.

Belongs to the dihydrofolate reductase family.

It catalyses the reaction (6S)-5,6,7,8-tetrahydrofolate + NADP(+) = 7,8-dihydrofolate + NADPH + H(+). Its pathway is cofactor biosynthesis; tetrahydrofolate biosynthesis; 5,6,7,8-tetrahydrofolate from 7,8-dihydrofolate: step 1/1. Key enzyme in folate metabolism. Catalyzes an essential reaction for de novo glycine and purine synthesis, and for DNA precursor synthesis. The sequence is that of Dihydrofolate reductase (folA) from Buchnera aphidicola subsp. Acyrthosiphon pisum (strain APS) (Acyrthosiphon pisum symbiotic bacterium).